We begin with the raw amino-acid sequence, 294 residues long: NAD kinase (294 aa).

Asp73 (proton acceptor) is an active-site residue. Residues Asp73–Gly74, Asn147–Glu148, His158, Arg175, Asp177, Thr188–Ser193, and Gln249 contribute to the NAD(+) site.

It belongs to the NAD kinase family. A divalent metal cation is required as a cofactor.

The protein localises to the cytoplasm. The enzyme catalyses NAD(+) + ATP = ADP + NADP(+) + H(+). Its function is as follows. Involved in the regulation of the intracellular balance of NAD and NADP, and is a key enzyme in the biosynthesis of NADP. Catalyzes specifically the phosphorylation on 2'-hydroxyl of the adenosine moiety of NAD to yield NADP. The protein is NAD kinase of Aeromonas salmonicida (strain A449).